Reading from the N-terminus, the 266-residue chain is Manganese catalase (266 aa).

Glu-35 lines the Mn(2+) pocket. The Ca(2+) site is built by Asp-57 and Asp-61. Residues Glu-66, His-69, Glu-148, and His-181 each contribute to the Mn(2+) site. Ca(2+) contacts are provided by Asn-218, Ser-220, and Gly-222. The tract at residues 243 to 266 (ENPEAMGGIPHIKPGDPRLHNHQG) is disordered. The segment covering 255-266 (KPGDPRLHNHQG) has biased composition (basic and acidic residues).

The protein belongs to the manganese catalase family. As to quaternary structure, homohexamer. The cofactor is Ca(2+). Mn(2+) serves as cofactor.

The catalysed reaction is 2 H2O2 = O2 + 2 H2O. Catalyzes the decomposition of hydrogen peroxide into water and oxygen. The chain is Manganese catalase from Lactiplantibacillus plantarum (Lactobacillus plantarum).